Here is an 873-residue protein sequence, read N- to C-terminus: Programmed cell death 6-interacting protein (873 aa).

An N-acetylalanine modification is found at Ala-2. The region spanning 3-397 is the BRO1 domain; it reads SFIWVQLKKT…AQMREATTLA (395 aa). The segment at 176-508 is interaction with CHMP4A, CHMP4B and CHMP4C; it reads TVDISPDTVG…KFRAVLDKAV (333 aa). Lys-215 bears the N6-acetyllysine mark. Residues 423 to 873 are interaction with SDCBP; the sequence is LTKSTAVVEQ…PPQQSYYPQQ (451 aa). Position 484 is a phosphothreonine (Thr-484). A Phosphoserine modification is found at Ser-486. The interval 508-873 is self-association; sequence VQADGQVKER…PPQQSYYPQQ (366 aa). 2 disordered regions span residues 719-808 and 837-873; these read AREP…GPPY and PYPPVYHQSPGQAPYPGPQQPTYPFPQPPQQSYYPQQ. The tract at residues 722 to 725 is interaction with TSG101; it reads PSAP. Ser-735 carries the post-translational modification Phosphoserine. 2 positions are modified to phosphothreonine: Thr-742 and Thr-745. Residues 745–767 show a composition bias toward pro residues; it reads TPAPRTMPPAKPQPPARPPPPVL. Omega-N-methylarginine is present on Arg-749. The span at 768-791 shows a compositional bias: low complexity; the sequence is PANRVPPAAAATAPAGVGTASAAP. Composition is skewed to pro residues over residues 792–808 and 849–865; these read PQTPGSAPPPQAQGPPY and APYPGPQQPTYPFPQPP. An interaction with CEP55 region spans residues 802-811; that stretch reads QAQGPPYPTY.

In terms of assembly, self-associates. Interacts with SH3KBP1. Interacts with PDCD6 in a calcium-dependent manner. Interacts with TSG101 in a calcium-dependent manner; PDCD6IP homooligomerization may be required for TSG101-binding. Interacts with SGSM3. Directly interacts with CHMP4A, CHMP4B and CHMP4C. Directly interacts with CEP55 in a 1:2 stoechiometry; this interaction is required for PDCD6IP targeting to the midbody. May interact with PDGFRB. Interacts with SH3GL1 and SH3GL2/endophilin-1. Forms a complex with SDCBP and SDC2. Found in a complex with F-actin, TJP1/ZO-1 and PARD3. Interacts with CD2AP. Interacts with ARRDC1. Interacts (via BRO1 domain) with the ATG12-ATG3 conjugate; this interaction is bridged by ATG12 and promotes multiple PDCD6IP-mediated functions such as endolysosomal trafficking, macroautophagy and exosome biogenesis. Post-translationally, may be phosphorylated on tyrosine residues by activated PDGFRB. Expressed in astrocytes and glioma cells.

It is found in the cytoplasm. Its subcellular location is the cytosol. It localises to the melanosome. The protein localises to the cytoskeleton. The protein resides in the microtubule organizing center. It is found in the centrosome. Its subcellular location is the secreted. It localises to the extracellular exosome. The protein localises to the cell junction. The protein resides in the tight junction. It is found in the midbody. Its subcellular location is the midbody ring. Functionally, multifunctional protein involved in endocytosis, multivesicular body biogenesis, membrane repair, cytokinesis, apoptosis and maintenance of tight junction integrity. Class E VPS protein involved in concentration and sorting of cargo proteins of the multivesicular body (MVB) for incorporation into intralumenal vesicles (ILVs) that are generated by invagination and scission from the limiting membrane of the endosome. Binds to the phospholipid lysobisphosphatidic acid (LBPA) which is abundant in MVBs internal membranes. The MVB pathway requires the sequential function of ESCRT-O, -I,-II and -III complexes. The ESCRT machinery also functions in topologically equivalent membrane fission events, such as the terminal stages of cytokinesis. Adapter for a subset of ESCRT-III proteins, such as CHMP4, to function at distinct membranes. Required for completion of cytokinesis. May play a role in the regulation of both apoptosis and cell proliferation. Regulates exosome biogenesis in concert with SDC1/4 and SDCBP. By interacting with F-actin, PARD3 and TJP1 secures the proper assembly and positioning of actomyosin-tight junction complex at the apical sides of adjacent epithelial cells that defines a spatial membrane domain essential for the maintenance of epithelial cell polarity and barrier. This is Programmed cell death 6-interacting protein from Rattus norvegicus (Rat).